The sequence spans 169 residues: Putative phosphoesterase SACOL1020 (169 aa).

Catalysis depends on histidine 34, which acts as the Proton donor. Short sequence motifs (HXTX) lie at residues 34–37 (HVTI) and 115–118 (HFTI). Residue histidine 115 is the Proton acceptor of the active site.

The protein belongs to the 2H phosphoesterase superfamily. YjcG family.

This Staphylococcus aureus (strain COL) protein is Putative phosphoesterase SACOL1020.